The sequence spans 434 residues: Serine hydroxymethyltransferase (434 aa).

(6S)-5,6,7,8-tetrahydrofolate contacts are provided by residues leucine 133 and 137 to 139 (GHL). Position 242 is an N6-(pyridoxal phosphate)lysine (lysine 242).

The protein belongs to the SHMT family. In terms of assembly, homodimer. Pyridoxal 5'-phosphate serves as cofactor.

Its subcellular location is the cytoplasm. The enzyme catalyses (6R)-5,10-methylene-5,6,7,8-tetrahydrofolate + glycine + H2O = (6S)-5,6,7,8-tetrahydrofolate + L-serine. It functions in the pathway one-carbon metabolism; tetrahydrofolate interconversion. It participates in amino-acid biosynthesis; glycine biosynthesis; glycine from L-serine: step 1/1. In terms of biological role, catalyzes the reversible interconversion of serine and glycine with tetrahydrofolate (THF) serving as the one-carbon carrier. This reaction serves as the major source of one-carbon groups required for the biosynthesis of purines, thymidylate, methionine, and other important biomolecules. Also exhibits THF-independent aldolase activity toward beta-hydroxyamino acids, producing glycine and aldehydes, via a retro-aldol mechanism. The protein is Serine hydroxymethyltransferase of Bradyrhizobium sp. (strain BTAi1 / ATCC BAA-1182).